The sequence spans 217 residues: Pro-Pro endopeptidase (217 aa).

The N-terminal stretch at 1–27 (MKWDKRVVALILAVMIVCPLFAAPAHA) is a signal peptide. Positions 30–216 (QSILDKLVVL…TYEFMAKLFA (187 aa)) constitute an ATLF-like domain. The plays a crucial role in substrate specificity stretch occupies residues 112-115 (SERV). His137 is a binding site for Zn(2+). The Proton acceptor role is filled by Glu138. Zn(2+) is bound by residues His141, Tyr174, and Glu181.

It belongs to the peptidase M34 family. Pro-Pro endopeptidase subfamily. As to quaternary structure, monomer. The cofactor is Zn(2+).

It localises to the secreted. The catalysed reaction is The enzyme catalyzes the hydrolytic cleavage of peptide bonds between two proline residues.. Functionally, zinc-dependent endoprotease with a unique preference for proline residues surrounding the scissile bond, which cleaves in a PLP-|-PVP motif. Cleaves the cell surface protein encoded by an adjacent gene, which contains two PPEP-2 cleaving sites and putative extracellular matrix-binding domains. Thereby, may have a role in the regulation of P.alvei adhesion. Is not able to cleave within the PVP-|-PVQ motif, and only shows a very poor cleavage of the VNP-|-PVP motif in vitro, which is the optimal substrate peptide for PPEP-1 from P.difficile. The sequence is that of Pro-Pro endopeptidase from Paenibacillus alvei (strain ATCC 6344 / DSM 29 / NBRC 3343 / NCIMB 9371 / NCTC 6352) (Bacillus alvei).